The following is a 459-amino-acid chain: NADH-ubiquinone oxidoreductase chain 4 (459 aa).

The next 13 helical transmembrane spans lie at 22 to 42 (MIWINTTTHSLIISIIPLLFF), 60 to 80 (PLTTPLLMLTTWLLPLTIMAS), 94 to 112 (LYLSMLISLQISLIMTFTA), 113 to 133 (TELIMFYIFFEATLIPTLVII), 145 to 165 (AGTYFLFYTLVGSLPLLIALI), 196 to 216 (WLAYTMAFMVKMPLYGLHLWL), 224 to 244 (PIAGSMMLAAVLLKLGGYGMM), 257 to 277 (MAYPFLALSLWGMIMTSSISL), 284 to 303 (SLIAYSSISHMALVVAAILI), 308 to 330 (SFTGAVVLMIAHGLTSSLLFCLA), 351 to 371 (LLPLMALWWLLASLANLALPP), 391 to 411 (TTLLLTGSNMLITALYSLYMF), and 435 to 455 (ILMFMHLSPILLLSLNPDIIT).

This sequence belongs to the complex I subunit 4 family. In terms of assembly, core subunit of respiratory chain NADH dehydrogenase (Complex I) which is composed of 45 different subunits.

Its subcellular location is the mitochondrion inner membrane. The enzyme catalyses a ubiquinone + NADH + 5 H(+)(in) = a ubiquinol + NAD(+) + 4 H(+)(out). Its function is as follows. Core subunit of the mitochondrial membrane respiratory chain NADH dehydrogenase (Complex I) which catalyzes electron transfer from NADH through the respiratory chain, using ubiquinone as an electron acceptor. Essential for the catalytic activity and assembly of complex I. This Gorilla gorilla gorilla (Western lowland gorilla) protein is NADH-ubiquinone oxidoreductase chain 4 (MT-ND4).